The chain runs to 369 residues: Peptide chain release factor 2 (369 aa).

N5-methylglutamine is present on glutamine 249.

The protein belongs to the prokaryotic/mitochondrial release factor family. In terms of processing, methylated by PrmC. Methylation increases the termination efficiency of RF2.

It localises to the cytoplasm. Peptide chain release factor 2 directs the termination of translation in response to the peptide chain termination codons UGA and UAA. The polypeptide is Peptide chain release factor 2 (Corynebacterium diphtheriae (strain ATCC 700971 / NCTC 13129 / Biotype gravis)).